A 185-amino-acid chain; its full sequence is Ribosome-recycling factor (185 aa).

The interval 127–158 is disordered; sequence AVRNTRQDANNKVKKLEKDKEISEDESKKAQE.

This sequence belongs to the RRF family.

The protein localises to the cytoplasm. Functionally, responsible for the release of ribosomes from messenger RNA at the termination of protein biosynthesis. May increase the efficiency of translation by recycling ribosomes from one round of translation to another. The protein is Ribosome-recycling factor of Helicobacter pylori (strain G27).